The sequence spans 967 residues: Kinesin-like protein KIF28P (967 aa).

The Kinesin motor domain occupies 7–355 (DSVKAVRVRP…LRYAERERKI (349 aa)). 111–118 (GQTGSGKS) serves as a coordination point for ATP. One can recognise an FHA domain in the interval 410–472 (APCPRPALSP…LQHLDRLILG (63 aa)). Positions 822-851 (NQIPELYLKLLKLEQETEPLRNINRALREE) form a coiled coil.

This sequence belongs to the TRAFAC class myosin-kinesin ATPase superfamily. Kinesin family.

The protein localises to the mitochondrion membrane. In terms of biological role, microtubule-dependent motor protein required for mitochondrion morphology and transport of mitochondria in neuronal cells. The protein is Kinesin-like protein KIF28P (KIF28P) of Homo sapiens (Human).